The sequence spans 2339 residues: Voltage-dependent N-type calcium channel subunit alpha-1B (2339 aa).

Topologically, residues 1–90 (MVRFGDELGG…DNVVRKYAKR (90 aa)) are cytoplasmic. Residues 15–34 (AGGAERARGGGAGGAGGPGP) are compositionally biased toward gly residues. The interval 15–37 (AGGAERARGGGAGGAGGPGPGGL) is disordered. Arg-22 bears the Omega-N-methylarginine mark. The I repeat unit spans residues 82-359 (NVVRKYAKRI…LVLGVLSGEF (278 aa)). The chain crosses the membrane as a helical span at residues 91–114 (ITEWPPFEYMILATIIANCIVLAL). Over 115-131 (EQHLPDGDKTPMSERLD) the chain is Extracellular. A helical membrane pass occupies residues 132-152 (DTEPYFIGIFCFEAGIKILAL). At 153–163 (GFVLHKGSYLR) the chain is on the cytoplasmic side. A helical transmembrane segment spans residues 164–182 (NGWNVMDFVVVLTGILATA). The Extracellular portion of the chain corresponds to 183–187 (GTDFD). Residues 188 to 211 (LRTLRAVRVLRPLKLVSGIPSLQV) traverse the membrane as a helical segment. Over 212 to 221 (VLKSIMKAMV) the chain is Cytoplasmic. A helical transmembrane segment spans residues 222 to 244 (PLLQIGLLLFFAILMFAIIGLEF). Over 245–331 (YMGKFHKACF…NTNDAAGNTW (87 aa)) the chain is Extracellular. Asn-256 is a glycosylation site (N-linked (GlcNAc...) asparagine). The helical transmembrane segment at 332–356 (NWLYFIPLIIIGSFFMLNLVLGVLS) threads the bilayer. Topologically, residues 357–483 (GEFAKERERV…FFIRRMVKAQ (127 aa)) are cytoplasmic. The tract at residues 379-396 (QQIERELNGYLEWIFKAE) is binding to the beta subunit. The residue at position 411 (Ser-411) is a Phosphoserine. 452–459 (ASLKSGKT) is a binding site for ATP. Residues 469 to 713 (EKMFRFFIRR…VFLAIAVDNL (245 aa)) form an II repeat. A helical membrane pass occupies residues 484 to 502 (SFYWTVLCVVALNTLCVAM). Residues 503–512 (VHYNQPQRLT) are Extracellular-facing. The chain crosses the membrane as a helical span at residues 513 to 535 (TALYFAEFVFLGLFLTEMSLKMY). Topologically, residues 536 to 545 (GLGPRSYFRS) are cytoplasmic. An a 1,2-diacyl-sn-glycero-3-phospho-(1D-myo-inositol-4,5-bisphosphate)-binding site is contributed by Ser-545. A helical membrane pass occupies residues 546 to 567 (SFNCFDFGVIVGSIFEVVWAAV). Topologically, residues 568 to 574 (KPGTSFG) are extracellular. Residues 575 to 587 (ISVLRALRLLRIF) traverse the membrane as a helical segment. The a 1,2-diacyl-sn-glycero-3-phospho-(1D-myo-inositol-4,5-bisphosphate) site is built by Arg-585 and Lys-588. Residues 588–605 (KVTKYWNSLRNLVVSLLN) lie on the Cytoplasmic side of the membrane. The chain crosses the membrane as a helical span at residues 606–631 (SMKSIISLLFLLFLFIVVFALLGMQL). At 632-683 (FGGQFNFKDETPTTNFDTFPAAILTVFQILTGEDWNAVMYHGIESQGGVSRG) the chain is on the extracellular side. The chain crosses the membrane as a helical span at residues 684–710 (MFSSFYFIVLTLFGNYTLLNVFLAIAV). Residues 711–1156 (DNLANAQELT…CCHYIVTMRY (446 aa)) are Cytoplasmic-facing. Phosphoserine occurs at positions 746, 749, and 784. 5 stretches are compositionally biased toward basic and acidic residues: residues 809–827 (DVKTHLDRPLVVEPGRDAP), 870–891 (EQDRAEALRAEGGELGPREERG), 927–937 (GSPEEAAEREP), 973–984 (CPREAESSEEPA), and 999–1026 (TAEKDKEAAEKGGEATEAEKDKEARNHQ). 2 disordered regions span residues 809 to 1026 (DVKT…RNHQ) and 1056 to 1084 (VEEQPEDADNQRNVTRMGSQPPDTSTTVH). Over residues 1066–1083 (QRNVTRMGSQPPDTSTTV) the composition is skewed to polar residues. Phosphoserine is present on Ser-1074. One copy of the III repeat lies at 1142–1424 (NLLRRCCHYI…IFVALIIITF (283 aa)). A helical transmembrane segment spans residues 1157–1175 (FEMVILVVIALSSIALAAE). Over 1176–1183 (DPVRTDSP) the chain is Extracellular. Residues 1184 to 1208 (RNNALKYMDYIFTGVFTFEMVIKMI) traverse the membrane as a helical segment. Residues 1209–1222 (DLGLLLHPGAYFRD) lie on the Cytoplasmic side of the membrane. The helical transmembrane segment at 1223 to 1243 (LWNILDFIVVSGALVAFAFSG) threads the bilayer. At 1244–1249 (SKGKDI) the chain is on the extracellular side. A helical transmembrane segment spans residues 1250-1270 (STIKSLRVLRVLRPLKTIKRL). The Cytoplasmic portion of the chain corresponds to 1271–1288 (PKLKAVFDCVVNSLKNVL). A helical membrane pass occupies residues 1289 to 1308 (NILIVYMLFMFIFAVIAVQL). At 1309–1395 (FKGKFFYCTD…EQGPSPGYRM (87 aa)) the chain is on the extracellular side. A helical transmembrane segment spans residues 1396–1421 (ELSIFYVVYFVVFPFFFVNIFVALII). Topologically, residues 1422–1476 (ITFQEQGDKVMSECSLEKNERACIDFAISARPLTRYMPQNKQSFQYKTWTFVVSP) are cytoplasmic. The IV repeat unit spans residues 1461–1714 (NKQSFQYKTW…LFVAVIMDNF (254 aa)). Residues 1477–1495 (PFEYFIMAMIALNTVVLMM) traverse the membrane as a helical segment. The Extracellular segment spans residues 1496-1503 (KFYDAPYE). A helical transmembrane segment spans residues 1504-1528 (YELMLKCLNIVFTSMFSMECVLKII). Residues 1529–1538 (AFGVLNYFRD) lie on the Cytoplasmic side of the membrane. Residues 1539–1560 (AWNVFDFVTVLGSITDILVTEI) form a helical membrane-spanning segment. Over 1561–1566 (ANNFIN) the chain is Extracellular. Asn-1566 is a glycosylation site (N-linked (GlcNAc...) asparagine). The helical transmembrane segment at 1567–1585 (LSFLRLFRAARLIKLLRQG) threads the bilayer. Residues 1586–1604 (YTIRILLWTFVQSFKALPY) are Cytoplasmic-facing. A helical transmembrane segment spans residues 1605-1624 (VCLLIAMLFFIYAIIGMQVF). At 1625-1686 (GNIALDDDTS…SNASECGSDF (62 aa)) the chain is on the extracellular side. Asn-1678 is a glycosylation site (N-linked (GlcNAc...) asparagine). A helical membrane pass occupies residues 1687-1710 (AYFYFVSFIFLCSFLMLNLFVAVI). At 1711–2339 (MDNFEYLTRD…CHHPDRDRRC (629 aa)) the chain is on the cytoplasmic side. The EF-hand domain maps to 1727 to 1762 (HHLDEFIRVWAEYDPAACGRISYSDMFEMLKHMSPP). The Ca(2+) site is built by Asp-1740, Arg-1746, and Asp-1751. The segment at 1983–2312 (TLSGPDAEPQ…QPPPLRRVPN (330 aa)) is disordered. Basic residues predominate over residues 2050 to 2064 (PHHHHHRCHRRRDRK). A Phosphoserine modification is found at Ser-2067. Residues 2099–2136 (CRRERERRQERGRSQERRQPSSSSSEKHRFYSCDRFGG) are compositionally biased toward basic and acidic residues. Composition is skewed to polar residues over residues 2144–2155 (PSLSSHPTSPTA) and 2165–2181 (GSGSVHGSPLLSTSGAS). Ser-2224, Ser-2233, and Ser-2256 each carry phosphoserine. Positions 2286–2302 (SNSGRSSRTSYVSSLTS) are enriched in low complexity.

This sequence belongs to the calcium channel alpha-1 subunit (TC 1.A.1.11) family. CACNA1B subfamily. In terms of assembly, multisubunit complex consisting of alpha-1, alpha-2, beta and delta subunits in a 1:1:1:1 ratio. The channel activity is directed by the pore-forming and voltage-sensitive alpha-1 subunit. In many cases, this subunit is sufficient to generate voltage-sensitive calcium channel activity. The auxiliary subunits beta and alpha-2/delta linked by a disulfide bridge regulate the channel activity. Interacts with RIMS1. Interacts with FMR1 (via C-terminus); this interaction induces a decrease in the number of presynaptic functional CACNA1B channels at the cell surface. Phosphorylated in vitro by CaM-kinase II, PKA, PKC and CGPK. In terms of tissue distribution, widespread expression throughout the brain. Highest levels in corpus striatum and midbrain.

The protein resides in the membrane. The enzyme catalyses Ca(2+)(in) = Ca(2+)(out). Its activity is regulated as follows. Is specifically blocked by omega-conotoxin GVIA. Is specifically blocked by omega-conotoxin MVIIA (ziconotide). Is insensitive to dihydropyridines (DHP). In terms of biological role, voltage-sensitive calcium channels (VSCC) mediate the entry of calcium ions into excitable cells and are also involved in a variety of calcium-dependent processes, including muscle contraction, hormone or neurotransmitter release, gene expression, cell motility, cell division and cell death. This alpha-1B subunit gives rise to N-type calcium currents. N-type calcium channels belong to the 'high-voltage activated' (HVA) group. They are involved in pain signaling. Calcium channels containing alpha-1B subunit may play a role in directed migration of immature neurons. Mediates Ca(2+) release probability at hippocampal neuronal soma and synaptic terminals. The chain is Voltage-dependent N-type calcium channel subunit alpha-1B (CACNA1B) from Oryctolagus cuniculus (Rabbit).